The primary structure comprises 466 residues: uncharacterized protein (466 aa).

It belongs to the myoviridae tail sheath protein family.

This is an uncharacterized protein from Bacillus subtilis (strain 168).